The primary structure comprises 220 residues: Probable GTP-binding protein EngB (220 aa).

An EngB-type G domain is found at 26–200; the sequence is EGIEIAFAGR…RAKLDEWYAP (175 aa). GTP is bound by residues 34 to 41, 61 to 65, 79 to 82, 146 to 149, and 179 to 181; these read GRSNAGKS, GRTQL, DLPG, TKAD, and FSS. Residues Ser-41 and Thr-63 each coordinate Mg(2+).

Belongs to the TRAFAC class TrmE-Era-EngA-EngB-Septin-like GTPase superfamily. EngB GTPase family. Requires Mg(2+) as cofactor.

Its function is as follows. Necessary for normal cell division and for the maintenance of normal septation. The sequence is that of Probable GTP-binding protein EngB from Vibrio cholerae serotype O1 (strain ATCC 39315 / El Tor Inaba N16961).